The following is a 368-amino-acid chain: MSTDSDTTPDTEEAREQLIDLAADFYDQFADGEVPTMTIPTRTKSNIVFDEDEQVWVYGDRNSTRSAKTISGAEKILKAVYTIDFLSQQLEEDRSSTLRELYYLSESWDLDEAQFNTQDESNNLIEDLEIVSDVKREDFHMRPEESGAKVMGPLLLREQTNRGDREIHCQDDVGQGGYQIPNNPDTIEFLDNDAKFVLCVETGGMRDRLVENGFDDEYDALVVHLGGQPARATRRLIKRLHDELDLPVTVFTDGDPWSYRIFGSVSYGSIKSAHLSEYLATPEAQFIGIRPEDIVEYELPTDPLSDSDVNALESELEDPRFQTDFWEEQIELQLDINKKAEQQALASRGLDFVTETYLPERLDEMGIL.

In terms of domain architecture, Topo IIA-type catalytic spans 9–148 (PDTEEAREQL…FHMRPEESGA (140 aa)). Y103 acts as the O-(5'-phospho-DNA)-tyrosine intermediate in catalysis. Residues E201 and D253 each contribute to the Mg(2+) site.

It belongs to the TOP6A family. As to quaternary structure, homodimer. Heterotetramer of two Top6A and two Top6B chains. Mg(2+) is required as a cofactor.

The catalysed reaction is ATP-dependent breakage, passage and rejoining of double-stranded DNA.. Functionally, relaxes both positive and negative superturns and exhibits a strong decatenase activity. In Haloarcula marismortui (strain ATCC 43049 / DSM 3752 / JCM 8966 / VKM B-1809) (Halobacterium marismortui), this protein is Type 2 DNA topoisomerase 6 subunit A.